Here is a 427-residue protein sequence, read N- to C-terminus: MESLTLQPIARVEGTVNLPGSKSVSNRALLLAALARGTTVLTNLLDSDDVRHMLNALSALGVQYTLSADRTRCEVTGNGGPLRSAAALELFLGNAGTAMRPLAAALCLGSNDIVLTGEPRMKERPIGHLVDALRQGGAQIDCLEQENYPPLRLRGGFQGGNVEVDGSVSSQFLTALLMTAPLAPQDTVIVIKGDLVSKPYIDITLHLMKTFGVEVDNQSYQRFVVRGKQQYQSPGDYLVEGDASSASYFLAAGAIKGGTVKVTGIGRNSVQGDIRFADVLEKMGATVTWGDDFIACTHGELKAVDMDMNHIPDAAMTIATAALFAQGTTTLRNIYNWRVKETDRLFAMATELRKVGAEVEEGEDYIRITPPAKLKYAEIGTYNDHRMAMCFSLVALSDTPVTILDPKCTAKTFPDYFEQLARISTLA.

The 3-phosphoshikimate site is built by lysine 22, serine 23, and arginine 27. Lysine 22 contributes to the phosphoenolpyruvate binding site. Phosphoenolpyruvate contacts are provided by glycine 96 and arginine 124. 3-phosphoshikimate-binding residues include serine 169, serine 170, glutamine 171, serine 197, aspartate 313, asparagine 336, and lysine 340. Glutamine 171 is a phosphoenolpyruvate binding site. The active-site Proton acceptor is the aspartate 313. Positions 344, 386, and 411 each coordinate phosphoenolpyruvate.

Belongs to the EPSP synthase family. Monomer.

It localises to the cytoplasm. It carries out the reaction 3-phosphoshikimate + phosphoenolpyruvate = 5-O-(1-carboxyvinyl)-3-phosphoshikimate + phosphate. Its pathway is metabolic intermediate biosynthesis; chorismate biosynthesis; chorismate from D-erythrose 4-phosphate and phosphoenolpyruvate: step 6/7. In terms of biological role, catalyzes the transfer of the enolpyruvyl moiety of phosphoenolpyruvate (PEP) to the 5-hydroxyl of shikimate-3-phosphate (S3P) to produce enolpyruvyl shikimate-3-phosphate and inorganic phosphate. The sequence is that of 3-phosphoshikimate 1-carboxyvinyltransferase from Klebsiella pneumoniae subsp. pneumoniae (strain ATCC 700721 / MGH 78578).